The sequence spans 237 residues: Chalcone--flavanone isomerase 1 (237 aa).

3 residues coordinate substrate: Thr-48, Asn-113, and Ser-190.

The protein belongs to the chalcone isomerase family.

It carries out the reaction a chalcone = a flavanone.. It participates in secondary metabolite biosynthesis; flavonoid biosynthesis. In terms of biological role, catalyzes the intramolecular cyclization of bicyclic chalcones into tricyclic (S)-flavanones. Responsible for the isomerization of 4,2',4',6'-tetrahydroxychalcone (also termed chalcone) into naringenin. In Fragaria ananassa (Strawberry), this protein is Chalcone--flavanone isomerase 1 (CHI1).